Consider the following 460-residue polypeptide: N-myc proto-oncogene protein (460 aa).

The interaction with AURKA stretch occupies residues 19-47 (LEFDSLQPCFYPDEDDFYFGGPDSTPPGE). The interaction with AURKA and FBXW7 stretch occupies residues 61-90 (LSPSRAFSEQSPEPSDWATEMLLPEADLWG). The short motif at 76–85 (DWATEMLLPE) is the 9aaTAD element. 3 disordered regions span residues 131–169 (VSEK…GAGR), 221–288 (AAAP…SNSK), and 330–388 (APSP…LERQ). The span at 138-158 (GRGPPAAGPATPGAGAANPAG) shows a compositional bias: low complexity. Residues 159-169 (RGHGGTAGAGR) are compositionally biased toward gly residues. Over residues 221–233 (AAAPASAAVAAPP) the composition is skewed to low complexity. The span at 255–274 (TLSDSDDEDDEEEDEEEEID) shows a compositional bias: acidic residues. Residues Ser257 and Ser259 each carry the phosphoserine; by CK2 modification. In terms of domain architecture, bHLH spans 377–429 (ERRRNHNILERQRRNDLRSSFLTLRDHVPELVKNEKAAKVVILKKATEYVHSL). Residues 429–450 (LQAEEHQLLLEKEKLQARQQQL) are leucine-zipper.

As to quaternary structure, efficient DNA binding requires dimerization with another bHLH protein. Binds DNA as a heterodimer with MAX. Interacts with KDM5A, KDM5B and HUWE1. Interacts with MYCNOS. Interacts with AURKA; interaction is phospho-independent and triggers AURKA activation; AURKA competes with FBXW7 for binding to unphosphorylated MYCN but not for binding to unphosphorylated MYCN. Interacts with FBXW7; FBXW7 competes with AURKA for binding to unphosphorylated MYCN but not for binding to phosphorylated MYCN. Phosphorylated by GSK3-beta which may promote its degradation. Phosphorylated by AURKA.

It localises to the nucleus. Its function is as follows. Positively regulates the transcription of MYCNOS in neuroblastoma cells. This is N-myc proto-oncogene protein (MYCN) from Marmota monax (Woodchuck).